The sequence spans 103 residues: Large ribosomal subunit protein bL21 (103 aa).

It belongs to the bacterial ribosomal protein bL21 family. As to quaternary structure, part of the 50S ribosomal subunit. Contacts protein L20.

Its function is as follows. This protein binds to 23S rRNA in the presence of protein L20. The protein is Large ribosomal subunit protein bL21 of Rhodococcus jostii (strain RHA1).